We begin with the raw amino-acid sequence, 437 residues long: 5-hydroxytryptamine receptor 3B (437 aa).

An N-terminal signal peptide occupies residues 1 to 21; that stretch reads MILLWSCLLVAVVGILGTATP. Residues 22 to 235 are Extracellular-facing; it reads QPGNSSLHRL…RFNVVIRRCP (214 aa). N-linked (GlcNAc...) asparagine glycans are attached at residues Asn25, Asn92, and Asn134. Residues Cys151 and Cys165 are joined by a disulfide bond. Residues 236–255 traverse the membrane as a helical segment; it reads LAYVVSLLIPSIFLMLVDLG. Residues 256–266 are Cytoplasmic-facing; that stretch reads SFYLPPNCRAR. Residues 267 to 284 traverse the membrane as a helical segment; that stretch reads IVFKTNVLVGYTVFRVNM. Residues 285–295 are Extracellular-facing; the sequence is SDEVPRSAGCT. The chain crosses the membrane as a helical span at residues 296–324; that stretch reads SLIGVFFTVCMALLVLSLSKSILLIKFLY. The Cytoplasmic segment spans residues 325-410; the sequence is EERHSEQERP…WLAILCHFDQ (86 aa). Residues 377–409 are HA-stretch; determines single-channel conductance in 5-HT3 receptors; the sequence is FWFQLQSINNSLRTRDQVYQKEVEWLAILCHFD. A helical membrane pass occupies residues 411-434; that stretch reads LLFRIYLAVLGLYTVTLCSLWALW. Over 435-437 the chain is Extracellular; it reads SRM.

It belongs to the ligand-gated ion channel (TC 1.A.9) family. 5-hydroxytryptamine receptor (TC 1.A.9.2) subfamily. HTR3B sub-subfamily. In terms of assembly, forms homopentameric as well as heteropentameric serotonin-activated cation-selective channel complexes with HTR3A. The homomeric complex is not functional. Heteropentameric complexes display properties which resemble that of neuronal serotonin-activated channels in vivo. N-glycosylation is required for membrane localization. Expressed in peripheral neurons, but not in neurons of the central nervous system.

Its subcellular location is the postsynaptic cell membrane. It is found in the cell membrane. The enzyme catalyses Na(+)(in) = Na(+)(out). The catalysed reaction is K(+)(in) = K(+)(out). It catalyses the reaction Ca(2+)(in) = Ca(2+)(out). In terms of biological role, forms serotonin (5-hydroxytryptamine/5-HT3)-activated cation-selective channel complexes, which when activated cause fast, depolarizing responses in neurons. This chain is 5-hydroxytryptamine receptor 3B, found in Rattus norvegicus (Rat).